We begin with the raw amino-acid sequence, 698 residues long: Protein SST2 (698 aa).

The segment at 10-203 (ELSSKNFSRT…GAKPNVWSPT (194 aa)) is fungal-DR. Serine 252 bears the Phosphoserine mark. A DEP domain is found at 273-358 (SNAGIRLFEN…SRSSFFTLSK (86 aa)). Phosphoserine is present on serine 408. The 270-residue stretch at 420–689 (KLDYVLTDPG…TQSDVYKDAS (270 aa)) folds into the RGS domain. Residue serine 539 is modified to Phosphoserine; by MAPK. Positions 545-586 (FPTNLYDPSPASAESAASSISSTEADTLGEPPEVSLKPSKNL) are disordered. The segment covering 551 to 570 (DPSPASAESAASSISSTEAD) has biased composition (low complexity). Phosphoserine is present on serine 587.

Post-translationally, phosphorylated by FUS3 and KSS1.

In terms of biological role, desensitization to alpha-factor pheromone. Is involved in regulating the signaling pathway for responding to mating pheromone. This chain is Protein SST2 (SST2), found in Saccharomyces cerevisiae (strain ATCC 204508 / S288c) (Baker's yeast).